We begin with the raw amino-acid sequence, 529 residues long: Peptide chain release factor 3 (529 aa).

The 270-residue stretch at 11–280 (AKRRTFAIIS…GLVAWAPAPM (270 aa)) folds into the tr-type G domain. GTP is bound by residues 20–27 (SHPDAGKT), 88–92 (DTPGH), and 142–145 (NKLD).

It belongs to the TRAFAC class translation factor GTPase superfamily. Classic translation factor GTPase family. PrfC subfamily.

It is found in the cytoplasm. Increases the formation of ribosomal termination complexes and stimulates activities of RF-1 and RF-2. It binds guanine nucleotides and has strong preference for UGA stop codons. It may interact directly with the ribosome. The stimulation of RF-1 and RF-2 is significantly reduced by GTP and GDP, but not by GMP. The sequence is that of Peptide chain release factor 3 from Salmonella gallinarum (strain 287/91 / NCTC 13346).